Consider the following 200-residue polypeptide: SKP1-like protein 19 (200 aa).

The span at 67-92 shows a compositional bias: basic and acidic residues; that stretch reads DDVVETHESSTKGDKTVEEAKKKPDD. The disordered stretch occupies residues 67-109; the sequence is DDVVETHESSTKGDKTVEEAKKKPDDVAVPESTEGDDEAEDKK. The tract at residues 132–190 is interaction with the F-box domain of F-box proteins; sequence ILAANYLNVQGLFDLCSKTIADYIKDMTPEEVRELFNIENDFTPEEEEAIRNENAWTFE.

The protein belongs to the SKP1 family. As to quaternary structure, part of a SCF (SKP1-cullin-F-box) protein ligase complex. Interacts with CPR1/CPR30. Expressed in leaves and flowers.

It is found in the nucleus. The protein operates within protein modification; protein ubiquitination. Its function is as follows. Involved in ubiquitination and subsequent proteasomal degradation of target proteins. Together with CUL1, RBX1 and a F-box protein, it forms a SCF E3 ubiquitin ligase complex. The functional specificity of this complex depends on the type of F-box protein. In the SCF complex, it serves as an adapter that links the F-box protein to CUL1. This is SKP1-like protein 19 (ASK19) from Arabidopsis thaliana (Mouse-ear cress).